Here is a 379-residue protein sequence, read N- to C-terminus: 1-deoxy-D-xylulose 5-phosphate reductoisomerase (379 aa).

The NADPH site is built by Thr-10, Gly-11, Ser-12, Ile-13, Arg-38, Asn-39, and Asn-121. A 1-deoxy-D-xylulose 5-phosphate-binding site is contributed by Lys-122. Residue Glu-123 coordinates NADPH. A Mn(2+)-binding site is contributed by Asp-147. Residues Ser-148, Glu-149, Ser-173, and His-196 each coordinate 1-deoxy-D-xylulose 5-phosphate. Mn(2+) is bound at residue Glu-149. An NADPH-binding site is contributed by Gly-202. 1-deoxy-D-xylulose 5-phosphate is bound by residues Ser-209, Asn-214, Lys-215, and Glu-218. A Mn(2+)-binding site is contributed by Glu-218.

The protein belongs to the DXR family. Mg(2+) is required as a cofactor. It depends on Mn(2+) as a cofactor.

The catalysed reaction is 2-C-methyl-D-erythritol 4-phosphate + NADP(+) = 1-deoxy-D-xylulose 5-phosphate + NADPH + H(+). The protein operates within isoprenoid biosynthesis; isopentenyl diphosphate biosynthesis via DXP pathway; isopentenyl diphosphate from 1-deoxy-D-xylulose 5-phosphate: step 1/6. Functionally, catalyzes the NADPH-dependent rearrangement and reduction of 1-deoxy-D-xylulose-5-phosphate (DXP) to 2-C-methyl-D-erythritol 4-phosphate (MEP). The protein is 1-deoxy-D-xylulose 5-phosphate reductoisomerase of Chlamydia trachomatis serovar A (strain ATCC VR-571B / DSM 19440 / HAR-13).